A 101-amino-acid chain; its full sequence is Replication restart protein PriB (101 aa).

Positions 1-101 (MTTNNLVLSG…IHAENVELKT (101 aa)) constitute an SSB domain.

It belongs to the PriB family. Homodimer. Interacts with PriA and DnaT. Component of the replication restart primosome. Primosome assembly occurs via a 'hand-off' mechanism. PriA binds to replication forks, subsequently PriB then DnaT bind; DnaT then displaces ssDNA to generate the helicase loading substrate.

Its function is as follows. Involved in the restart of stalled replication forks, which reloads the replicative helicase on sites other than the origin of replication; the PriA-PriB pathway is the major replication restart pathway. During primosome assembly it facilitates complex formation between PriA and DnaT on DNA; stabilizes PriA on DNA. Stimulates the DNA unwinding activity of PriA helicase. In Shewanella oneidensis (strain ATCC 700550 / JCM 31522 / CIP 106686 / LMG 19005 / NCIMB 14063 / MR-1), this protein is Replication restart protein PriB.